Reading from the N-terminus, the 158-residue chain is Urease accessory protein UreE (158 aa).

This sequence belongs to the UreE family.

The protein localises to the cytoplasm. Involved in urease metallocenter assembly. Binds nickel. Probably functions as a nickel donor during metallocenter assembly. The sequence is that of Urease accessory protein UreE from Microcystis aeruginosa (strain NIES-843 / IAM M-2473).